The primary structure comprises 359 residues: Chorismate synthase (359 aa).

R47 lines the NADP(+) pocket. FMN contacts are provided by residues 123–125 (RSS), G283, 298–302 (KPTSS), and R326.

This sequence belongs to the chorismate synthase family. As to quaternary structure, homotetramer. FMNH2 is required as a cofactor.

It catalyses the reaction 5-O-(1-carboxyvinyl)-3-phosphoshikimate = chorismate + phosphate. The protein operates within metabolic intermediate biosynthesis; chorismate biosynthesis; chorismate from D-erythrose 4-phosphate and phosphoenolpyruvate: step 7/7. Catalyzes the anti-1,4-elimination of the C-3 phosphate and the C-6 proR hydrogen from 5-enolpyruvylshikimate-3-phosphate (EPSP) to yield chorismate, which is the branch point compound that serves as the starting substrate for the three terminal pathways of aromatic amino acid biosynthesis. This reaction introduces a second double bond into the aromatic ring system. This chain is Chorismate synthase, found in Chlamydia felis (strain Fe/C-56) (Chlamydophila felis).